Reading from the N-terminus, the 425-residue chain is Glutamate-1-semialdehyde 2,1-aminomutase (425 aa).

Position 265 is an N6-(pyridoxal phosphate)lysine (Lys-265).

This sequence belongs to the class-III pyridoxal-phosphate-dependent aminotransferase family. HemL subfamily. Homodimer. It depends on pyridoxal 5'-phosphate as a cofactor.

The protein resides in the cytoplasm. The catalysed reaction is (S)-4-amino-5-oxopentanoate = 5-aminolevulinate. It functions in the pathway porphyrin-containing compound metabolism; protoporphyrin-IX biosynthesis; 5-aminolevulinate from L-glutamyl-tRNA(Glu): step 2/2. This is Glutamate-1-semialdehyde 2,1-aminomutase from Nitrosospira multiformis (strain ATCC 25196 / NCIMB 11849 / C 71).